Here is a 316-residue protein sequence, read N- to C-terminus: Tetrahydromethanopterin S-methyltransferase subunit H (316 aa).

Belongs to the MtrH family. As to quaternary structure, the complex is composed of 8 subunits; MtrA, MtrB, MtrC, MtrD, MtrE, MtrF, MtrG and MtrH.

The enzyme catalyses 5-methyl-5,6,7,8-tetrahydromethanopterin + coenzyme M + 2 Na(+)(in) = 5,6,7,8-tetrahydromethanopterin + methyl-coenzyme M + 2 Na(+)(out). It functions in the pathway one-carbon metabolism; methanogenesis from CO(2); methyl-coenzyme M from 5,10-methylene-5,6,7,8-tetrahydromethanopterin: step 2/2. Its function is as follows. Part of a complex that catalyzes the formation of methyl-coenzyme M and tetrahydromethanopterin from coenzyme M and methyl-tetrahydromethanopterin. This is an energy-conserving, sodium-ion translocating step. MtrH catalyzes the transfer of the methyl group from methyl-tetrahydromethanopterin to the corrinoid prosthetic group of MtrA. The protein is Tetrahydromethanopterin S-methyltransferase subunit H of Methanosarcina barkeri (strain Fusaro / DSM 804).